The sequence spans 407 residues: Transcriptional regulator ICP22 homolog (407 aa).

The tract at residues 34–268 (RKRRRKLKPQ…STQPGGVPKL (235 aa)) is disordered. Residues 81 to 241 (EREGEGGEEG…EEAEEEEEEA (161 aa)) show a composition bias toward acidic residues.

The protein belongs to the herpesviridae ICP22 family.

In Saimiriine herpesvirus 2 (strain 11) (SaHV-2), this protein is Transcriptional regulator ICP22 homolog (73).